A 1996-amino-acid polypeptide reads, in one-letter code: Protein Shroom3 (1996 aa).

The region spanning 25-110 (YIYLEAFLEG…TLRLVVRRDV (86 aa)) is the PDZ domain. The interval 150–173 (KHRRSEPAGRPHSWHTTKSGEKQP) is disordered. Phosphoserine is present on S213. 5 disordered regions span residues 340-389 (NGQG…PARS), 437-468 (EKSPENSPPVKPKHNYTQKAQPGQPLLPTSIY), 568-629 (DASL…WEGD), 673-772 (RRHS…LQGF), and 788-1053 (FEQR…PESS). A phosphoserine mark is found at S439 and S443. Residues 700-718 (KAEDPGRKAAPDLGSHLDR) are compositionally biased toward basic and acidic residues. The segment covering 750–768 (HPHTSSLGRRGPGPGSASA) has biased composition (low complexity). Residues 814 to 823 (TVSTSSTSGN) show a composition bias toward polar residues. S816 carries the post-translational modification Phosphoserine. Composition is skewed to basic and acidic residues over residues 826 to 836 (EETKAHIRFSE) and 846 to 859 (QHFKNGELKLEEAS). Composition is skewed to polar residues over residues 862–871 (PCGQQLSGGA) and 887–896 (RSQSTFQLSS). S890 is modified (phosphoserine). Over residues 897–909 (EPEREPEWRDRPG) the composition is skewed to basic and acidic residues. A phosphoserine mark is found at S910 and S913. Residues 928-1030 (IKDAQSRVLG…SEPEKMNEVG (103 aa)) form the ASD1 domain. A compositionally biased stretch (low complexity) spans 950–964 (APVASRSWRPRPSSA). A Phosphoserine modification is found at S970. Positions 1011-1027 (LTPEQKKRSYSEPEKMN) are enriched in basic and acidic residues. S1069 and S1072 each carry phosphoserine. Disordered stretches follow at residues 1093 to 1115 (KTGKRPTSAAGCSLQEPGPLRER), 1137 to 1223 (SSLS…MSAE), 1315 to 1573 (ECPG…SFNK), and 1627 to 1665 (SLGGQPAPIQTQSLSHDPVSGTQGLEKKVSPDPQKSSED). The segment covering 1137–1148 (SSLSSLREPSLQ) has biased composition (low complexity). Residue S1221 is modified to Phosphoserine. Residues 1366–1375 (YCSQDGQTGR) show a composition bias toward polar residues. Positions 1403–1417 (CEGDGPEHGVEEGTR) are enriched in basic and acidic residues. S1441 bears the Phosphoserine mark. A compositionally biased stretch (polar residues) spans 1459–1472 (KQQSLPSLCSTSDP). The span at 1498–1515 (PPPHEDYEDEVFVRDPHP) shows a compositional bias: basic and acidic residues. Positions 1524–1536 (EPLPPPPPPPPSQ) are enriched in pro residues. The span at 1634–1649 (PIQTQSLSHDPVSGTQ) shows a compositional bias: polar residues. Positions 1651 to 1665 (LEKKVSPDPQKSSED) are enriched in basic and acidic residues. In terms of domain architecture, ASD2 spans 1669–1957 (EALAKEIVHQ…QVKCLLESLP (289 aa)).

It belongs to the shroom family. As to quaternary structure, interacts with F-actin. Interacts with ROCK1.

The protein localises to the cell junction. It is found in the adherens junction. The protein resides in the cytoplasm. It localises to the cytoskeleton. Its subcellular location is the apical cell membrane. Controls cell shape changes in the neuroepithelium during neural tube closure. Induces apical constriction in epithelial cells by promoting the apical accumulation of F-actin and myosin II, and probably by bundling stress fibers. Induces apicobasal cell elongation by redistributing gamma-tubulin and directing the assembly of robust apicobasal microtubule arrays. This Homo sapiens (Human) protein is Protein Shroom3 (SHROOM3).